We begin with the raw amino-acid sequence, 211 residues long: Protein FAM167A (211 aa).

2 disordered regions span residues 1–30 (MSVP…DHLR) and 56–108 (EEQT…GKLE). The stretch at 120–153 (LRKELMEMRLQDQQLARQLMRLRSDIHKLKIEQT) forms a coiled coil.

Belongs to the FAM167 (SEC) family.

The polypeptide is Protein FAM167A (FAM167A) (Bos taurus (Bovine)).